Consider the following 235-residue polypeptide: Glial cell line-derived neurotrophic factor (235 aa).

A signal peptide spans 1–19 (MKLWDILATCLLLLSSVST). A propeptide spanning residues 20–87 (RPLFHKLQPS…DFIEATLGRL (68 aa)) is cleaved from the precursor. 2 disordered regions span residues 34-60 (VRSESPALDPIIDSQPETSNPKQASME) and 91-137 (SDVE…RVKG). The segment covering 119–128 (GERKRSRGRA) has biased composition (basic residues). Disulfide bonds link C142-C203, C169-C232, and C173-C234. 2 N-linked (GlcNAc...) asparagine glycosylation sites follow: N150 and N186.

It belongs to the TGF-beta family. GDNF subfamily. As to quaternary structure, homodimer; disulfide-linked. Interacts with GFRA1 coreceptor and RET: forms a 2:2:2 ternary complex composed of GDNF ligand, GFRA1 and RET receptor. In terms of tissue distribution, first expressed at 14 hours post-fertilization (hpf) in the ventral half of anterior somites and in intermediate mesoderm. Ventral somitic expression persists and extends more posteriorly over the next 12 hours. Expressed throughout the ventral trunk mesoderm and endoderm at 24 hpf. By 30 hpf, somitic expression ceases and by 36 hpf, expression becomes restricted to the endodermal cells forming the gut, with expression along the whole length of the developing gut tube at 72 hpf.

The protein resides in the secreted. Its function is as follows. Neurotrophic factor that enhances survival and morphological differentiation of dopaminergic neurons and increases their high-affinity dopamine uptake. Acts by binding to its coreceptor, GFRA1, leading to autophosphorylation and activation of the RET receptor. This Danio rerio (Zebrafish) protein is Glial cell line-derived neurotrophic factor.